We begin with the raw amino-acid sequence, 253 residues long: Putative glutamine amidotransferase PB2B2.05 (253 aa).

The 224-residue stretch at isoleucine 5–glutamine 228 folds into the Glutamine amidotransferase type-1 domain. Cysteine 100 serves as the catalytic Nucleophile. Active-site residues include histidine 200 and glutamate 202.

The protein localises to the cytoplasm. The protein resides in the nucleus. The polypeptide is Putative glutamine amidotransferase PB2B2.05 (Schizosaccharomyces pombe (strain 972 / ATCC 24843) (Fission yeast)).